A 330-amino-acid chain; its full sequence is Anthranilate phosphoribosyltransferase (330 aa).

5-phospho-alpha-D-ribose 1-diphosphate is bound by residues G75, 78-79 (GD), T83, 85-88 (NVST), 103-111 (KHGNRAASS), and A115. Anthranilate is bound at residue G75. Mg(2+) is bound at residue S87. N106 is an anthranilate binding site. R161 is a binding site for anthranilate. 2 residues coordinate Mg(2+): D220 and E221.

The protein belongs to the anthranilate phosphoribosyltransferase family. Homodimer. Requires Mg(2+) as cofactor.

The catalysed reaction is N-(5-phospho-beta-D-ribosyl)anthranilate + diphosphate = 5-phospho-alpha-D-ribose 1-diphosphate + anthranilate. The protein operates within amino-acid biosynthesis; L-tryptophan biosynthesis; L-tryptophan from chorismate: step 2/5. In terms of biological role, catalyzes the transfer of the phosphoribosyl group of 5-phosphorylribose-1-pyrophosphate (PRPP) to anthranilate to yield N-(5'-phosphoribosyl)-anthranilate (PRA). This Novosphingobium aromaticivorans (strain ATCC 700278 / DSM 12444 / CCUG 56034 / CIP 105152 / NBRC 16084 / F199) protein is Anthranilate phosphoribosyltransferase.